A 509-amino-acid polypeptide reads, in one-letter code: Protein WHAT'S THIS FACTOR 1 homolog, chloroplastic (509 aa).

Residues 1–56 (MDAKLLLLPFPSPPATLHHHPPPPKSLFLGASLPLLHPPPPLRLLRPGAPRRLAVV) constitute a chloroplast transit peptide. Residues 65 to 393 (KEIPFDNVIQ…LKEKMRALVA (329 aa)) enclose the PORR domain. 2 disordered regions span residues 402-431 (VPAT…DEDE) and 444-509 (SGGK…RERW). Residues 461–474 (ENDDSPPDFEDDDG) are compositionally biased toward acidic residues.

The protein resides in the plastid. It localises to the chloroplast. RNA-binding protein involved in group II intron splicing. Binds specific group II introns and promotes their splicing. Functions in the context of a heterodimer with the ribonuclease III domain-containing protein RNC1. This is Protein WHAT'S THIS FACTOR 1 homolog, chloroplastic from Oryza sativa subsp. japonica (Rice).